Here is a 102-residue protein sequence, read N- to C-terminus: NADH-quinone oxidoreductase subunit K (102 aa).

3 consecutive transmembrane segments (helical) span residues 6-26, 30-50, and 63-83; these read LIAMMILAAGLFAIGLFGVLA, IMFQLVALEVALSGPALGFVA, and MFILVLTLAAAEVAVGLALFL.

Belongs to the complex I subunit 4L family. NDH-1 is composed of 14 different subunits. Subunits NuoA, H, J, K, L, M, N constitute the membrane sector of the complex.

The protein localises to the cell inner membrane. The catalysed reaction is a quinone + NADH + 5 H(+)(in) = a quinol + NAD(+) + 4 H(+)(out). In terms of biological role, NDH-1 shuttles electrons from NADH, via FMN and iron-sulfur (Fe-S) centers, to quinones in the respiratory chain. The immediate electron acceptor for the enzyme in this species is believed to be ubiquinone. Couples the redox reaction to proton translocation (for every two electrons transferred, four hydrogen ions are translocated across the cytoplasmic membrane), and thus conserves the redox energy in a proton gradient. This Rhodopseudomonas palustris (strain BisB5) protein is NADH-quinone oxidoreductase subunit K.